The following is a 437-amino-acid chain: UDP-N-acetylmuramate--L-alanine ligase (437 aa).

114–120 contributes to the ATP binding site; the sequence is GTHGKTS.

It belongs to the MurCDEF family.

The protein resides in the cytoplasm. It carries out the reaction UDP-N-acetyl-alpha-D-muramate + L-alanine + ATP = UDP-N-acetyl-alpha-D-muramoyl-L-alanine + ADP + phosphate + H(+). Its pathway is cell wall biogenesis; peptidoglycan biosynthesis. Its function is as follows. Cell wall formation. The sequence is that of UDP-N-acetylmuramate--L-alanine ligase from Lactobacillus acidophilus (strain ATCC 700396 / NCK56 / N2 / NCFM).